Reading from the N-terminus, the 171-residue chain is 16S rRNA aminocarboxypropyltransferase (171 aa).

Residues T18, L68, L91, and S110 each coordinate S-adenosyl-L-methionine.

The protein belongs to the TDD superfamily. TSR3 family.

It is found in the cytoplasm. It catalyses the reaction an N(1)-methylpseudouridine in rRNA + S-adenosyl-L-methionine = N(1)-methyl-N(3)-[(3S)-3-amino-3-carboxypropyl]pseudouridine in rRNA + S-methyl-5'-thioadenosine + H(+). Functionally, aminocarboxypropyltransferase that catalyzes the aminocarboxypropyl transfer on pseudouridine corresponding to position 914 in M.jannaschii 16S rRNA. It constitutes the last step in biosynthesis of the hypermodified N1-methyl-N3-(3-amino-3-carboxypropyl) pseudouridine (m1acp3-Psi). The protein is 16S rRNA aminocarboxypropyltransferase of Methanosphaera stadtmanae (strain ATCC 43021 / DSM 3091 / JCM 11832 / MCB-3).